A 756-amino-acid polypeptide reads, in one-letter code: MNYRELMQKKNVRPYVLMARFGLEKENQRSTREGLLATTEHPTVFGNRSYHPYIQTDFSETQLELITPVANSGTEMLRFLDAIHDVARRSIPEDEMLWPLSMPPQLPTKDEEIKIAKLDQYDAVLYRRYLAKEYGKRKQMVSGIHFNFEYDQALIQQLYDEQSEVTDCKQFKTKVYMKVARNFLRYRWLITYLFGASPVSEDRYFRVYDDQPQEPVRSIRNSTYGYRNHDNVKVSYASLERYLEDIHRMVENGLLSEEKEFYAPVRLRGGKQMSDLPKTGIRYIELRNLDLNPFSRLGIVEDTVDFLHYFMLYLLWTDEKEEADEWVKTGDIFNEQVALGHPHETIKLIAEGDRIFSEMIDMLDALGIRKGKEVVGKYYQQLRNPQDTVSGKMWTIIQENSNSELGNIFGNQYQSMAFERPYQLAGFREMELSTQIFLFDAIQKGLEIEILDEQEQFLKLQHGEHIEYVKNANMTSKDNYVVPLIMENKTVTKKILSAAGFHVPGGEEFSSFIEAQEAHLRYANKAFVVKPKSTNYGLGITIFKEGASLEDFTEALRIAFKEDTAVLIEEFLPGTEYRFFVLDNDVKAIMLRVPANVTGDGKHTVEELVAAKNSDPLRGTNHRAPLELIQLNDLEKLMLKEQGLTIYSVPEKEQIVYLRENSNVSTGGDSIDMTDVIDDSYKQIAIEAVAALGAKICGIDLIIPDKDVKGTRDSLTYGIIEANFNPAMHMHVYPYAGQGRRLTMDVLKLLYPEVVQ.

Positions 1–338 are glutamate--cysteine ligase; sequence MNYRELMQKK…TGDIFNEQVA (338 aa). Residues 493–751 enclose the ATP-grasp domain; sequence KKILSAAGFH…LTMDVLKLLY (259 aa). 520-578 serves as a coordination point for ATP; sequence LRYANKAFVVKPKSTNYGLGITIFKEGASLEDFTEALRIAFKEDTAVLIEEFLPGTEYR. 3 residues coordinate Mg(2+): Asp-700, Glu-721, and Asn-723. Residues Asp-700, Glu-721, and Asn-723 each coordinate Mn(2+).

This sequence in the N-terminal section; belongs to the glutamate--cysteine ligase type 1 family. Type 2 subfamily. As to quaternary structure, monomer. The cofactor is Mg(2+). Mn(2+) serves as cofactor.

The catalysed reaction is L-cysteine + L-glutamate + ATP = gamma-L-glutamyl-L-cysteine + ADP + phosphate + H(+). The enzyme catalyses gamma-L-glutamyl-L-cysteine + glycine + ATP = glutathione + ADP + phosphate + H(+). It functions in the pathway sulfur metabolism; glutathione biosynthesis; glutathione from L-cysteine and L-glutamate: step 1/2. The protein operates within sulfur metabolism; glutathione biosynthesis; glutathione from L-cysteine and L-glutamate: step 2/2. In terms of biological role, synthesizes glutathione from L-glutamate and L-cysteine via gamma-L-glutamyl-L-cysteine. The protein is Glutathione biosynthesis bifunctional protein GshAB of Enterococcus faecalis (strain ATCC 700802 / V583).